The following is a 419-amino-acid chain: Histidine--tRNA ligase (419 aa).

The protein belongs to the class-II aminoacyl-tRNA synthetase family. Homodimer.

The protein localises to the cytoplasm. The enzyme catalyses tRNA(His) + L-histidine + ATP = L-histidyl-tRNA(His) + AMP + diphosphate + H(+). The protein is Histidine--tRNA ligase of Halothermothrix orenii (strain H 168 / OCM 544 / DSM 9562).